The primary structure comprises 49 residues: MTKRTTIAARRVGLIDLGKATRQTKGLTQIQALDSVSGQFRDQLGLSAD.

Residues 1-25 (MTKRTTIAARRVGLIDLGKATRQTK) constitute a propeptide that is removed on maturation. Positions 26 to 34 (GLTQIQALD) form a cross-link, isoaspartyl glycine isopeptide (Gly-Asp).

In terms of processing, this lasso peptide is hydrolyzed to a linear form by the isopeptidase AtxE2, in vitro. The isopeptidase AtxE2 only recognizes the threaded form (but not the unthreaded form).

Its subcellular location is the cytoplasm. It is found in the secreted. Its function is as follows. Shows weak antimicrobial activity against its phylogenetic relative Caulobacter crescentus. Does not show activity against other bacteria tested (E.coli, Vibrio sp, Burkhoderia thailandensis, and Salmonella newport). In Asticcacaulis excentricus (strain ATCC 15261 / DSM 4724 / KCTC 12464 / NCIMB 9791 / VKM B-1370 / CB 48), this protein is Astexin-2.